We begin with the raw amino-acid sequence, 315 residues long: 4-hydroxy-3-methylbut-2-enyl diphosphate reductase (315 aa).

A [4Fe-4S] cluster-binding site is contributed by C12. The (2E)-4-hydroxy-3-methylbut-2-enyl diphosphate site is built by H43 and H81. Dimethylallyl diphosphate is bound by residues H43 and H81. The isopentenyl diphosphate site is built by H43 and H81. C103 serves as a coordination point for [4Fe-4S] cluster. A (2E)-4-hydroxy-3-methylbut-2-enyl diphosphate-binding site is contributed by H131. H131 is a binding site for dimethylallyl diphosphate. Isopentenyl diphosphate is bound at residue H131. The active-site Proton donor is the E133. T170 lines the (2E)-4-hydroxy-3-methylbut-2-enyl diphosphate pocket. Residue C198 coordinates [4Fe-4S] cluster. S226, N228, and S271 together coordinate (2E)-4-hydroxy-3-methylbut-2-enyl diphosphate. The dimethylallyl diphosphate site is built by S226, N228, and S271. The isopentenyl diphosphate site is built by S226, N228, and S271.

The protein belongs to the IspH family. It depends on [4Fe-4S] cluster as a cofactor.

It catalyses the reaction isopentenyl diphosphate + 2 oxidized [2Fe-2S]-[ferredoxin] + H2O = (2E)-4-hydroxy-3-methylbut-2-enyl diphosphate + 2 reduced [2Fe-2S]-[ferredoxin] + 2 H(+). The enzyme catalyses dimethylallyl diphosphate + 2 oxidized [2Fe-2S]-[ferredoxin] + H2O = (2E)-4-hydroxy-3-methylbut-2-enyl diphosphate + 2 reduced [2Fe-2S]-[ferredoxin] + 2 H(+). Its pathway is isoprenoid biosynthesis; dimethylallyl diphosphate biosynthesis; dimethylallyl diphosphate from (2E)-4-hydroxy-3-methylbutenyl diphosphate: step 1/1. It participates in isoprenoid biosynthesis; isopentenyl diphosphate biosynthesis via DXP pathway; isopentenyl diphosphate from 1-deoxy-D-xylulose 5-phosphate: step 6/6. Its function is as follows. Catalyzes the conversion of 1-hydroxy-2-methyl-2-(E)-butenyl 4-diphosphate (HMBPP) into a mixture of isopentenyl diphosphate (IPP) and dimethylallyl diphosphate (DMAPP). Acts in the terminal step of the DOXP/MEP pathway for isoprenoid precursor biosynthesis. The polypeptide is 4-hydroxy-3-methylbut-2-enyl diphosphate reductase (Geobacillus sp. (strain WCH70)).